The sequence spans 304 residues: Protease HtpX homolog (304 aa).

2 consecutive transmembrane segments (helical) span residues 14–34 (IFII…IGII) and 39–59 (YLNG…IMVM). His-144 lines the Zn(2+) pocket. Glu-145 is an active-site residue. His-148 is a Zn(2+) binding site. A run of 2 helical transmembrane segments spans residues 159–179 (IAIA…RMIF) and 202–222 (AIIY…ATAI). Position 231 (Glu-231) interacts with Zn(2+).

The protein belongs to the peptidase M48B family. The cofactor is Zn(2+).

Its subcellular location is the cell membrane. The protein is Protease HtpX homolog of Listeria monocytogenes serovar 1/2a (strain ATCC BAA-679 / EGD-e).